We begin with the raw amino-acid sequence, 544 residues long: Tyrosine-protein kinase fynb (544 aa).

Gly-2 carries N-myristoyl glycine lipidation. 2 S-palmitoyl cysteine lipidation sites follow: Cys-3 and Cys-6. Positions 89–150 constitute an SH3 domain; sequence TGVTLFVALY…PSNYVAPVDS (62 aa). Positions 156 to 253 constitute an SH2 domain; sequence WYFGKLGRKD…GLCCRLVVPC (98 aa). In terms of domain architecture, Protein kinase spans 278 to 531; that stretch reads LQLIKRLGNG…YLQAFLEDYF (254 aa). Residues 284 to 292 and Lys-306 contribute to the ATP site; that span reads LGNGQFGEV. Catalysis depends on Asp-397, which acts as the Proton acceptor. Residue Tyr-427 is modified to Phosphotyrosine; by autocatalysis. Position 538 is a phosphotyrosine (Tyr-538).

Belongs to the protein kinase superfamily. Tyr protein kinase family. SRC subfamily. Requires Mn(2+) as cofactor.

The protein localises to the cytoplasm. The catalysed reaction is L-tyrosyl-[protein] + ATP = O-phospho-L-tyrosyl-[protein] + ADP + H(+). Its activity is regulated as follows. Inhibited by phosphorylation of Tyr-538 by leukocyte common antigen and activated by dephosphorylation of this site. Tyrosine-protein kinase implicated in the control of cell growth. Plays a role in the regulation of intracellular calcium levels. Required in brain development and mature brain function with important roles in the regulation of axon growth, axon guidance, and neurite extension. Role in CNTN1-mediated signaling. This chain is Tyrosine-protein kinase fynb (fynb), found in Danio rerio (Zebrafish).